The following is a 208-amino-acid chain: NAD(P)H-quinone oxidoreductase subunit I (208 aa).

4Fe-4S ferredoxin-type domains follow at residues 55 to 84 (GRIH…VDWV) and 95 to 124 (RNYS…MTEE). [4Fe-4S] cluster contacts are provided by Cys64, Cys67, Cys70, Cys74, Cys104, Cys107, Cys110, and Cys114.

Belongs to the complex I 23 kDa subunit family. As to quaternary structure, NDH-1 is composed of at least 11 different subunits. It depends on [4Fe-4S] cluster as a cofactor.

The protein localises to the cellular thylakoid membrane. It carries out the reaction a plastoquinone + NADH + (n+1) H(+)(in) = a plastoquinol + NAD(+) + n H(+)(out). The catalysed reaction is a plastoquinone + NADPH + (n+1) H(+)(in) = a plastoquinol + NADP(+) + n H(+)(out). In terms of biological role, NDH-1 shuttles electrons from an unknown electron donor, via FMN and iron-sulfur (Fe-S) centers, to quinones in the respiratory and/or the photosynthetic chain. The immediate electron acceptor for the enzyme in this species is believed to be plastoquinone. Couples the redox reaction to proton translocation, and thus conserves the redox energy in a proton gradient. In Prochlorococcus marinus (strain AS9601), this protein is NAD(P)H-quinone oxidoreductase subunit I.